Here is a 483-residue protein sequence, read N- to C-terminus: CBL-interacting serine/threonine-protein kinase 19 (483 aa).

Positions tyrosine 28–phenylalanine 282 constitute a Protein kinase domain. Residues leucine 34–valine 42 and lysine 57 each bind ATP. Aspartate 150 functions as the Proton acceptor in the catalytic mechanism. Positions aspartate 168–glutamate 197 are activation loop. Serine 172 carries the post-translational modification Phosphoserine. Threonine 186 bears the Phosphothreonine mark. Positions serine 313 to serine 322 are enriched in polar residues. Positions serine 313–serine 338 are disordered. In terms of domain architecture, NAF spans proline 340–glutamate 364. Residues glycine 367–valine 396 are PPI. The disordered stretch occupies residues asparagine 459 to aspartate 483.

The protein belongs to the protein kinase superfamily. CAMK Ser/Thr protein kinase family. SNF1 subfamily. It depends on Mn(2+) as a cofactor.

The catalysed reaction is L-seryl-[protein] + ATP = O-phospho-L-seryl-[protein] + ADP + H(+). It carries out the reaction L-threonyl-[protein] + ATP = O-phospho-L-threonyl-[protein] + ADP + H(+). Functionally, CIPK serine-threonine protein kinases interact with CBL proteins. Binding of a CBL protein to the regulatory NAF domain of CIPK protein lead to the activation of the kinase in a calcium-dependent manner. This Arabidopsis thaliana (Mouse-ear cress) protein is CBL-interacting serine/threonine-protein kinase 19 (CIPK19).